The primary structure comprises 1388 residues: Dicer-like protein 2 (1388 aa).

Residues 23 to 203 form the Helicase ATP-binding domain; that stretch reads MLEASMKENI…LLTVESNLDA (181 aa). 36 to 43 is a binding site for ATP; the sequence is MDTGSGKT. The short motif at 144-147 is the DEAH box element; the sequence is DEAH. Residues 371 to 537 form the Helicase C-terminal domain; it reads SLLNFLDSLD…DDERQLQSVS (167 aa). The Dicer dsRNA-binding fold domain occupies 564-658; that stretch reads AMAHLHHFCA…LPLTKRPELK (95 aa). 2 RNase III domains span residues 919–1059 and 1098–1281; these read ATRL…MDGG and NERL…VDSG. Positions 1137, 1267, and 1270 each coordinate Mg(2+).

The protein belongs to the helicase family. Dicer subfamily. It depends on Mg(2+) as a cofactor. The cofactor is Mn(2+).

In terms of biological role, dicer-like endonuclease involved in cleaving double-stranded RNA in the RNA interference (RNAi) pathway. Produces 21 to 25 bp dsRNAs (siRNAs) which target the selective destruction of homologous RNAs leading to sequence-specific suppression of gene expression, called post-transcriptional gene silencing (PTGS). Part of a broad host defense response against viral infection and transposons. The polypeptide is Dicer-like protein 2 (dcl2) (Neosartorya fischeri (strain ATCC 1020 / DSM 3700 / CBS 544.65 / FGSC A1164 / JCM 1740 / NRRL 181 / WB 181) (Aspergillus fischerianus)).